Here is a 381-residue protein sequence, read N- to C-terminus: Protein RecA (381 aa).

79–86 (GPESSGKT) is an ATP binding site.

Belongs to the RecA family.

Its subcellular location is the cytoplasm. Functionally, can catalyze the hydrolysis of ATP in the presence of single-stranded DNA, the ATP-dependent uptake of single-stranded DNA by duplex DNA, and the ATP-dependent hybridization of homologous single-stranded DNAs. It interacts with LexA causing its activation and leading to its autocatalytic cleavage. This chain is Protein RecA, found in Streptococcus parasanguinis.